The following is a 610-amino-acid chain: Elongation factor 4 (610 aa).

A tr-type G domain is found at 13–195; the sequence is SHIRNFSIVA…AIVHKLPAPK (183 aa). GTP is bound by residues 25-30 and 142-145; these read DHGKST and NKID.

This sequence belongs to the TRAFAC class translation factor GTPase superfamily. Classic translation factor GTPase family. LepA subfamily.

It is found in the cell inner membrane. The enzyme catalyses GTP + H2O = GDP + phosphate + H(+). In terms of biological role, required for accurate and efficient protein synthesis under certain stress conditions. May act as a fidelity factor of the translation reaction, by catalyzing a one-codon backward translocation of tRNAs on improperly translocated ribosomes. Back-translocation proceeds from a post-translocation (POST) complex to a pre-translocation (PRE) complex, thus giving elongation factor G a second chance to translocate the tRNAs correctly. Binds to ribosomes in a GTP-dependent manner. The polypeptide is Elongation factor 4 (Rhizobium etli (strain ATCC 51251 / DSM 11541 / JCM 21823 / NBRC 15573 / CFN 42)).